The sequence spans 117 residues: Large ribosomal subunit protein uL18 (117 aa).

This sequence belongs to the universal ribosomal protein uL18 family. Part of the 50S ribosomal subunit; part of the 5S rRNA/L5/L18/L25 subcomplex. Contacts the 5S and 23S rRNAs.

In terms of biological role, this is one of the proteins that bind and probably mediate the attachment of the 5S RNA into the large ribosomal subunit, where it forms part of the central protuberance. The sequence is that of Large ribosomal subunit protein uL18 from Actinobacillus pleuropneumoniae serotype 5b (strain L20).